A 280-amino-acid chain; its full sequence is GTP-binding protein rhoC (280 aa).

A disordered region spans residues 13 to 59 (TSRRHSLVTPPPSVAPRQNRMRSQSVRVSNGTVSTDNSMSSGRVSEA). Polar residues predominate over residues 33 to 59 (MRSQSVRVSNGTVSTDNSMSSGRVSEA). A GTP-binding site is contributed by 76-83 (GDGGCGKT). An Effector region motif is present at residues 98–106 (YVPTVFENY). GTP-binding positions include 125–129 (DTAGQ) and 183–186 (LKSD). Residues 251–275 (WDTRLPSSSGKPGGKPIGGKKIKKR) are disordered. At Cys277 the chain carries Cysteine methyl ester. Cys277 carries S-geranylgeranyl cysteine lipidation. A propeptide spans 278–280 (KIL) (removed in mature form).

The protein belongs to the small GTPase superfamily. Rho family.

Its subcellular location is the cell membrane. The sequence is that of GTP-binding protein rhoC (rhoC) from Emericella nidulans (strain FGSC A4 / ATCC 38163 / CBS 112.46 / NRRL 194 / M139) (Aspergillus nidulans).